Reading from the N-terminus, the 523-residue chain is Alpha,alpha-trehalose-phosphate synthase [UDP-forming] (523 aa).

D-glucose 6-phosphate contacts are provided by tyrosine 98 and aspartate 152. Positions 288 and 293 each coordinate UDP. Positions 288 and 293 each coordinate UDP-alpha-D-glucose. Arginine 326 provides a ligand contact to D-glucose 6-phosphate. Residue 387 to 395 (DGMNLVSYE) coordinates UDP-alpha-D-glucose. UDP is bound at residue 391-395 (LVSYE). A disordered region spans residues 503-523 (QQFNLGEQREEGRLEPGEFDD). Basic and acidic residues predominate over residues 509-523 (EQREEGRLEPGEFDD).

Belongs to the glycosyltransferase 20 family.

It catalyses the reaction D-glucose 6-phosphate + UDP-alpha-D-glucose = alpha,alpha-trehalose 6-phosphate + UDP + H(+). Its pathway is carbohydrate biosynthesis. Functionally, synthase catalytic subunit of the trehalose synthase complex that catalyzes the production of trehalose from glucose-6-phosphate and UDP-alpha-D-glucose in a two step process. The disaccharide trehalose serves as a storage carbohydrate that is mobilized during conidial germination. Trehalose also serves as a protectant for cell integrity during stress. This chain is Alpha,alpha-trehalose-phosphate synthase [UDP-forming], found in Botryotinia fuckeliana (strain B05.10) (Noble rot fungus).